A 903-amino-acid chain; its full sequence is DNA-directed DNA polymerase (903 aa).

The tract at residues 103–340 is 3'-5'exonuclease; it reads YDHTKIRVAN…VLQIDAKRQF (238 aa). Residues Asp-114, Glu-116, and Asp-222 each coordinate Mg(2+). The interval 248 to 264 is beta hairpin; the sequence is TRVKVIENMYGSREIIT. Mg(2+)-binding residues include Asp-327, Asp-411, and Leu-412. The polymerase stretch occupies residues 380–903; that stretch reads IPQGRSHPVQ…KASLFDMFDF (524 aa). Substrate-binding positions include 414–416, Arg-482, and Lys-560; that span reads SLY. Position 623 (Asp-623) interacts with Mg(2+). The segment at 705 to 708 is binding of DNA in B-conformation; that stretch reads KKRY. An interaction with the polymerase clamp region spans residues 897-903; that stretch reads LFDMFDF.

The protein belongs to the DNA polymerase type-B family. Part of the replicase complex that includes the DNA polymerase, the polymerase clamp, the clamp loader complex, the single-stranded DNA binding protein, and the primase/helicase. Interacts with the polymerase clamp; this interaction constitutes the polymerase holoenzyme. Mg(2+) serves as cofactor.

The catalysed reaction is DNA(n) + a 2'-deoxyribonucleoside 5'-triphosphate = DNA(n+1) + diphosphate. Replicates the viral genomic DNA. This polymerase possesses two enzymatic activities: DNA synthesis (polymerase) and an exonucleolytic activity that degrades single-stranded DNA in the 3'- to 5'-direction for proofreading purpose. The chain is DNA-directed DNA polymerase (43) from Escherichia coli (Bacteriophage RB69).